The chain runs to 402 residues: B box and SPRY domain-containing protein (402 aa).

The tract at residues 1-20 is disordered; it reads MSAEGAEPGPGSGSGPGPGP. Residues 17–65 form a B box-type zinc finger; sequence GPGPLCPEHGQALSWFCGSERRPVCAACAGLGGRCRGHRIRRAEERAEE. In terms of domain architecture, B30.2/SPRY spans 212-402; sequence PLLTQLWATA…VADQTISIVR (191 aa).

Interacts with TRPV5 and TRPV6. Interacts with YWHAZ/14-3-3 protein zeta.

Its subcellular location is the cytoplasm. It localises to the membrane. Functionally, may regulate epithelial calcium transport by inhibiting TRPV5 activity. This is B box and SPRY domain-containing protein (BSPRY) from Homo sapiens (Human).